The sequence spans 682 residues: Methionine--tRNA ligase (682 aa).

Residues 14–24 (PYANGSIHLGH) carry the 'HIGH' region motif. Zn(2+) is bound by residues cysteine 145, cysteine 148, cysteine 158, and cysteine 161. The short motif at 331 to 335 (KMSKS) is the 'KMSKS' region element. Lysine 334 lines the ATP pocket. The tRNA-binding domain maps to 580 to 682 (AFAAVDLRVA…SGAKPGQRIK (103 aa)).

This sequence belongs to the class-I aminoacyl-tRNA synthetase family. MetG type 1 subfamily. In terms of assembly, homodimer. Zn(2+) is required as a cofactor.

Its subcellular location is the cytoplasm. It carries out the reaction tRNA(Met) + L-methionine + ATP = L-methionyl-tRNA(Met) + AMP + diphosphate. Its function is as follows. Is required not only for elongation of protein synthesis but also for the initiation of all mRNA translation through initiator tRNA(fMet) aminoacylation. In Pseudomonas savastanoi pv. phaseolicola (strain 1448A / Race 6) (Pseudomonas syringae pv. phaseolicola (strain 1448A / Race 6)), this protein is Methionine--tRNA ligase.